The sequence spans 123 residues: Unclassified hydrophobin 9 (123 aa).

A signal peptide spans 1 to 24; the sequence is MFFFNTKPIVFLVVLSVVATFAAA. 4 disulfides stabilise this stretch: Cys37/Cys103, Cys45/Cys97, Cys46/Cys88, and Cys104/Cys117.

Belongs to the fungal hydrophobin family. Self-assembles to form functional amyloid fibrils called rodlets. Self-assembly into fibrillar rodlets occurs spontaneously at hydrophobic:hydrophilic interfaces and the rodlets further associate laterally to form amphipathic monolayers.

Its subcellular location is the secreted. It is found in the cell wall. Its function is as follows. Aerial growth, conidiation, and dispersal of filamentous fungi in the environment rely upon a capability of their secreting small amphipathic proteins called hydrophobins (HPBs) with low sequence identity. Class I can self-assemble into an outermost layer of rodlet bundles on aerial cell surfaces, conferring cellular hydrophobicity that supports fungal growth, development and dispersal; whereas Class II form highly ordered films at water-air interfaces through intermolecular interactions but contribute nothing to the rodlet structure. This is Unclassified hydrophobin 9 from Pleurotus ostreatus (strain PC15) (Oyster mushroom).